The sequence spans 60 residues: Conotoxin Cal6.20 (60 aa).

The signal sequence occupies residues 1 to 22 (MKLTCVLIVAVLILTACQVIAA). Cystine bridges form between Cys32/Cys42, Cys35/Cys48, and Cys41/Cys55.

Belongs to the conotoxin O1 superfamily. As to expression, expressed by the venom duct.

It localises to the secreted. Functionally, probable neurotoxin. This is Conotoxin Cal6.20 from Californiconus californicus (California cone).